A 119-amino-acid polypeptide reads, in one-letter code: Protein TusC (119 aa).

This sequence belongs to the DsrF/TusC family. In terms of assembly, heterohexamer, formed by a dimer of trimers. The hexameric TusBCD complex contains 2 copies each of TusB, TusC and TusD. The TusBCD complex interacts with TusE.

It is found in the cytoplasm. Functionally, part of a sulfur-relay system required for 2-thiolation of 5-methylaminomethyl-2-thiouridine (mnm(5)s(2)U) at tRNA wobble positions. In Escherichia fergusonii (strain ATCC 35469 / DSM 13698 / CCUG 18766 / IAM 14443 / JCM 21226 / LMG 7866 / NBRC 102419 / NCTC 12128 / CDC 0568-73), this protein is Protein TusC.